The sequence spans 913 residues: Protein translocase subunit SecA (913 aa).

ATP-binding positions include Gln87, Gly105–Thr109, and Asp517. 2 disordered regions span residues Glu568 to Ser588 and Glu871 to Ser913. Zn(2+)-binding residues include Cys897, Cys899, Cys908, and His909. Positions Lys903–Ser913 are enriched in basic residues.

The protein belongs to the SecA family. As to quaternary structure, monomer and homodimer. Part of the essential Sec protein translocation apparatus which comprises SecA, SecYEG and auxiliary proteins SecDF-YajC and YidC. The cofactor is Zn(2+).

The protein localises to the cell inner membrane. It localises to the cytoplasm. It catalyses the reaction ATP + H2O + cellular proteinSide 1 = ADP + phosphate + cellular proteinSide 2.. Part of the Sec protein translocase complex. Interacts with the SecYEG preprotein conducting channel. Has a central role in coupling the hydrolysis of ATP to the transfer of proteins into and across the cell membrane, serving both as a receptor for the preprotein-SecB complex and as an ATP-driven molecular motor driving the stepwise translocation of polypeptide chains across the membrane. The chain is Protein translocase subunit SecA from Coxiella burnetii (strain RSA 493 / Nine Mile phase I).